The sequence spans 398 residues: MIIKPRVRGFICVSTHPTGCEANVREQIEYVKARGPIANGPKKVLVIGASTGYGLAARISAAFGSDAATLGVFFERAGSETKAGTAGWYNTAAFEKFATEQGLYATSINGDAFSDAVKQRTIEVIKRDLGQVDLVVYSLAAPKRTHPKSGEVFSSTLKPVGQAVNLRGIDTDKEVIRETVLEPATQDEIDHTVAVMGGEDWQMWIDALLEAGVLADGAKTTAFTYLGEKITHDIYWNGSIGAAKKDLDQKVLGIREKLAAKGGDARVSVLKAVVTQASSAIPMMPLYLSLLFKVMKEKGTHEGCIEQVYGLYKDSLYGAAPHLDDEGRLRADYKELDPEVQDRVQTLWSQVTNDNIYELTDFSGYKTDFLRLFGFEIAGVDYEADVNPDVQIPKLVQV.

NAD(+) contacts are provided by residues glycine 48–tyrosine 53, phenylalanine 74–glutamate 75, aspartate 111–alanine 112, and leucine 139–alanine 140. Tyrosine 225 contacts substrate. The active-site Proton donor is tyrosine 235. NAD(+)-binding positions include lysine 244 and valine 273–threonine 275.

This sequence belongs to the TER reductase family. In terms of assembly, monomer.

The catalysed reaction is a 2,3-saturated acyl-[ACP] + NAD(+) = a (2E)-enoyl-[ACP] + NADH + H(+). It functions in the pathway lipid metabolism; fatty acid biosynthesis. Functionally, involved in the final reduction of the elongation cycle of fatty acid synthesis (FAS II). Catalyzes the reduction of a carbon-carbon double bond in an enoyl moiety that is covalently linked to an acyl carrier protein (ACP). In Paraburkholderia xenovorans (strain LB400), this protein is Enoyl-[acyl-carrier-protein] reductase [NADH].